Here is a 342-residue protein sequence, read N- to C-terminus: Probable alcohol acetyltransferase (342 aa).

The transit peptide at 1–38 (MMILGKAGILAQYGTIYVRQNTIRNNLSSCIFKQSLCA) directs the protein to the mitochondrion. The propeptide at 39-46 (FHSLAKVL) is removed in mature form. The 252-residue stretch at 75–326 (PPIIILHGLF…AGHWVNAEKP (252 aa)) folds into the AB hydrolase-1 domain. Catalysis depends on charge relay system residues S152 and H319.

It belongs to the AB hydrolase superfamily. Post-translationally, processed by both the mitochondrial processing peptidase (MPP) and the mitochondrial octapeptidyl aminopeptidase (OCT1).

It localises to the mitochondrion. Functionally, probable alcohol acetyltransferase that uses acetyl-CoA to synthesize acetate esters from various alcohols. Not involved in the synthesis of ethyl acetate. The polypeptide is Probable alcohol acetyltransferase (IMO32) (Saccharomyces cerevisiae (strain ATCC 204508 / S288c) (Baker's yeast)).